The primary structure comprises 116 residues: MKLTRASQAPRYVAPAHHEVSTMRLQGREAGRTERFWVGLSVYRPGGTAEPAPTREETVYVVLDGELVVTVDGAETVLGWLDSVHLAKGELRSIHNRTDRQALLLVTVAHPVAEVA.

Positions 40 to 107 (LSVYRPGGTA…TDRQALLLVT (68 aa)) constitute a Cupin type-2 domain.

The protein resides in the secreted. It localises to the cell wall. It catalyses the reaction Hydrolysis of terminal non-reducing beta-D-galactose residues in beta-D-galactosides.. Beta-galactosidase activity is activated by Mg(2+) and significantly inhibited by Ca(2+), Cd(2+), Fe(2+), Ni(2+), Cu(2+) and Zn(2+). Inhibited by EDTA. Beta-D-galactopyranosidase that specifically recognizes the beta-glycosidic bonds formed with beta-D-galactopyranose (beta-D-Gal) or N-acetylgalactosamine (beta-D-GalNAc). May target the galactoside linkages in the exopolysaccharide component of the mycobacterial extracellular polymeric substance (EPS) and help dispersal of Mtb bacteria from a deteriorating biofilm. In Mycobacterium tuberculosis (strain ATCC 25618 / H37Rv), this protein is Beta-D-galactosidase Rv1717.